Reading from the N-terminus, the 450-residue chain is Glucose-6-phosphate isomerase (450 aa).

The active-site Proton donor is the E290. Active-site residues include H311 and K425.

It belongs to the GPI family.

The protein localises to the cytoplasm. The catalysed reaction is alpha-D-glucose 6-phosphate = beta-D-fructose 6-phosphate. The protein operates within carbohydrate biosynthesis; gluconeogenesis. It functions in the pathway carbohydrate degradation; glycolysis; D-glyceraldehyde 3-phosphate and glycerone phosphate from D-glucose: step 2/4. Catalyzes the reversible isomerization of glucose-6-phosphate to fructose-6-phosphate. The polypeptide is Glucose-6-phosphate isomerase (Leuconostoc mesenteroides subsp. mesenteroides (strain ATCC 8293 / DSM 20343 / BCRC 11652 / CCM 1803 / JCM 6124 / NCDO 523 / NBRC 100496 / NCIMB 8023 / NCTC 12954 / NRRL B-1118 / 37Y)).